A 445-amino-acid polypeptide reads, in one-letter code: UPF0210 protein llmg_1581 (445 aa).

Belongs to the UPF0210 family. Homodimer.

The chain is UPF0210 protein llmg_1581 from Lactococcus lactis subsp. cremoris (strain MG1363).